We begin with the raw amino-acid sequence, 210 residues long: Scoloptoxin SSD976 (210 aa).

A signal peptide spans 1–23; sequence MNILLSSTLFVLLMFQIIGSGMG.

Post-translationally, contains 3 disulfide bonds. As to expression, expressed by the venom gland.

The protein resides in the secreted. Its function is as follows. Voltage-gated calcium channel inhibitor. This is Scoloptoxin SSD976 from Scolopendra dehaani (Thai centipede).